The sequence spans 220 residues: Protein-L-isoaspartate O-methyltransferase (220 aa).

S67 is a catalytic residue.

This sequence belongs to the methyltransferase superfamily. L-isoaspartyl/D-aspartyl protein methyltransferase family.

It localises to the cytoplasm. The enzyme catalyses [protein]-L-isoaspartate + S-adenosyl-L-methionine = [protein]-L-isoaspartate alpha-methyl ester + S-adenosyl-L-homocysteine. Its function is as follows. Catalyzes the methyl esterification of L-isoaspartyl residues in peptides and proteins that result from spontaneous decomposition of normal L-aspartyl and L-asparaginyl residues. It plays a role in the repair and/or degradation of damaged proteins. This chain is Protein-L-isoaspartate O-methyltransferase, found in Chlorobium phaeobacteroides (strain BS1).